Consider the following 401-residue polypeptide: MSEQQPLPTLPMWRVDHIEPSPEMLALRANGPIHRVRFPSGHEGWWVTGYDEAKAVLSDAAFRPAGMPPAAFTPDSVILGSPGWLVSHEGREHARLRAIVAPAFSDRRVKLLVQQVEAIAAHLFETLAAQPQPADLRRHLSFPLPAMVISALMGVLYEDHAFFAGLSDEVMTHQHESGPRSASRLAWEELRAYIRGKMRDKRQDPDDNLLTDLLAAVDQGKASEEEAVGLAAGMLVAGHESTVAQIEFGLLAMFRHPQQRERLVGDPSLVDKAVEEILRMYPPGAGWDGIMRYPRTDVTIAGEHIPAESKVLVGLPATSFDPHHFDDPEIFDIERQEKPHLAFSYGPHACIGVALARLELKVVFGSIFQRLPALRLAVAPEQLKLRKEIITGGFEQFPVLW.

A heme-binding site is contributed by Cys-350.

This sequence belongs to the cytochrome P450 family. It depends on heme as a cofactor.

Cytochromes P450 are a group of heme-thiolate monooxygenases. They oxidize a variety of structurally unrelated compounds, including steroids, fatty acids, and xenobiotics. The chain is Cytochrome P450 BJ-1 (cyp112) from Bradyrhizobium diazoefficiens (strain JCM 10833 / BCRC 13528 / IAM 13628 / NBRC 14792 / USDA 110).